The primary structure comprises 206 residues: Large ribosomal subunit protein uL4 (206 aa).

Residues 63-97 (MYKQKGTGRARHHSARAPQFRGGGKAHGPVVRSHE) form a disordered region. Positions 64 to 77 (YKQKGTGRARHHSA) are enriched in basic residues.

Belongs to the universal ribosomal protein uL4 family. Part of the 50S ribosomal subunit.

One of the primary rRNA binding proteins, this protein initially binds near the 5'-end of the 23S rRNA. It is important during the early stages of 50S assembly. It makes multiple contacts with different domains of the 23S rRNA in the assembled 50S subunit and ribosome. Its function is as follows. Forms part of the polypeptide exit tunnel. The protein is Large ribosomal subunit protein uL4 of Rhizobium johnstonii (strain DSM 114642 / LMG 32736 / 3841) (Rhizobium leguminosarum bv. viciae).